The sequence spans 246 residues: tRNA (guanine-N(1)-)-methyltransferase (246 aa).

S-adenosyl-L-methionine is bound by residues Gly112 and 131 to 136 (IGDYVL).

This sequence belongs to the RNA methyltransferase TrmD family. As to quaternary structure, homodimer.

It is found in the cytoplasm. It catalyses the reaction guanosine(37) in tRNA + S-adenosyl-L-methionine = N(1)-methylguanosine(37) in tRNA + S-adenosyl-L-homocysteine + H(+). Functionally, specifically methylates guanosine-37 in various tRNAs. This chain is tRNA (guanine-N(1)-)-methyltransferase, found in Fervidobacterium nodosum (strain ATCC 35602 / DSM 5306 / Rt17-B1).